A 438-amino-acid polypeptide reads, in one-letter code: Glutamate-1-semialdehyde 2,1-aminomutase (438 aa).

At Lys272 the chain carries N6-(pyridoxal phosphate)lysine.

The protein belongs to the class-III pyridoxal-phosphate-dependent aminotransferase family. HemL subfamily. As to quaternary structure, homodimer. Pyridoxal 5'-phosphate is required as a cofactor.

It localises to the cytoplasm. It carries out the reaction (S)-4-amino-5-oxopentanoate = 5-aminolevulinate. The protein operates within porphyrin-containing compound metabolism; protoporphyrin-IX biosynthesis; 5-aminolevulinate from L-glutamyl-tRNA(Glu): step 2/2. It functions in the pathway porphyrin-containing compound metabolism; chlorophyll biosynthesis. This is Glutamate-1-semialdehyde 2,1-aminomutase from Chloroflexus aggregans (strain MD-66 / DSM 9485).